Consider the following 556-residue polypeptide: General transcription factor IIF subunit 1 (556 aa).

2 disordered regions span residues 82–128 and 226–499; these read TMTS…PAAA and SRLQ…PFTE. The span at 84 to 128 shows a compositional bias: low complexity; it reads TSAPNGTNSTGTTPNTTTTTTTTTTTTTTTTTAAGTPGAPNPAAA. Residues 245 to 275 are compositionally biased toward basic and acidic residues; the sequence is SGKKSIEELEEAEHRNRNEDPNRYKTTNEEK. Acidic residues-rich tracts occupy residues 291 to 338 and 378 to 394; these read GNGE…DVDL and GDDE…DQDD. Basic and acidic residues-rich tracts occupy residues 415–427 and 450–461; these read VKKE…DSKS and NKSDSSVDNRES. Positions 469-492 are enriched in low complexity; it reads SSPQAVQPNSPSQQQQQQQQNIDP.

This sequence belongs to the TFIIF alpha subunit family. In terms of assembly, heterodimer of an alpha and a beta subunit.

The protein resides in the nucleus. Its function is as follows. TFIIF is a general transcription initiation factor that binds to RNA polymerase II and helps to recruit it to the initiation complex in collaboration with TFIIB. It promotes transcription elongation. The chain is General transcription factor IIF subunit 1 (gtf2f1) from Dictyostelium discoideum (Social amoeba).